The primary structure comprises 290 residues: Lipoyl synthase (290 aa).

7 residues coordinate [4Fe-4S] cluster: cysteine 44, cysteine 49, cysteine 55, cysteine 70, cysteine 74, cysteine 77, and serine 281. The 215-residue stretch at 56–270 folds into the Radical SAM core domain; sequence WRCGTATFMI…KQIGLEKGFS (215 aa).

This sequence belongs to the radical SAM superfamily. Lipoyl synthase family. The cofactor is [4Fe-4S] cluster.

The protein localises to the cytoplasm. The enzyme catalyses [[Fe-S] cluster scaffold protein carrying a second [4Fe-4S](2+) cluster] + N(6)-octanoyl-L-lysyl-[protein] + 2 oxidized [2Fe-2S]-[ferredoxin] + 2 S-adenosyl-L-methionine + 4 H(+) = [[Fe-S] cluster scaffold protein] + N(6)-[(R)-dihydrolipoyl]-L-lysyl-[protein] + 4 Fe(3+) + 2 hydrogen sulfide + 2 5'-deoxyadenosine + 2 L-methionine + 2 reduced [2Fe-2S]-[ferredoxin]. The protein operates within protein modification; protein lipoylation via endogenous pathway; protein N(6)-(lipoyl)lysine from octanoyl-[acyl-carrier-protein]: step 2/2. Its function is as follows. Catalyzes the radical-mediated insertion of two sulfur atoms into the C-6 and C-8 positions of the octanoyl moiety bound to the lipoyl domains of lipoate-dependent enzymes, thereby converting the octanoylated domains into lipoylated derivatives. The protein is Lipoyl synthase of Treponema denticola (strain ATCC 35405 / DSM 14222 / CIP 103919 / JCM 8153 / KCTC 15104).